The following is a 404-amino-acid chain: Mitochondrial potassium channel (404 aa).

The N-terminal 30 residues, 1-30 (MTGRSRVLAMRHVGGVSPVLVRRDLFLTRT), are a transit peptide targeting the mitochondrion. The Mitochondrial matrix portion of the chain corresponds to 31 to 196 (LCSHGPSQPR…KERTRAERTK (166 aa)). Serine 65 bears the Phosphoserine mark. Residues 111–138 (VREAREDLESQQTKLKEVRDRLDRISRD) adopt a coiled-coil conformation. A helical membrane pass occupies residues 197-217 (NWSLIGSVLGALIGVAGSTYV). Topologically, residues 218-380 (NRVRLQELKA…LEAQVNRNTV (163 aa)) are mitochondrial intermembrane. The chain crosses the membrane as a helical span at residues 381 to 401 (YGTLVTCATFVAVLPVLYMLF). At 402 to 404 (RAS) the chain is on the mitochondrial matrix side.

As to quaternary structure, the mitochondrial potassium channel (mitoK(ATP)) forms a heteromultimer.

It localises to the mitochondrion inner membrane. The enzyme catalyses K(+)(in) = K(+)(out). With respect to regulation, channel activity inhibited by ATP via ABCB8/MITOSUR subunit. Its function is as follows. Pore-forming subunit of the mitochondrial ATP-gated potassium channel (mitoK(ATP)). Together with ATP-binding subunit ABCB8/MITOSUR of the mitoK(ATP) channel, mediates ATP-dependent K(+) currents across the mitochondrial inner membrane. An increase in ATP intracellular levels closes the channel, inhibiting K(+) transport, whereas a decrease in ATP levels enhances K(+) uptake in the mitochondrial matrix. May contribute to the homeostatic control of cellular metabolism under stress conditions by regulating the mitochondrial matrix volume. The chain is Mitochondrial potassium channel from Bos taurus (Bovine).